A 237-amino-acid polypeptide reads, in one-letter code: Casparian strip membrane protein 2 (237 aa).

Positions 1–48 are disordered; it reads MSGSDTSGSVHVDEHGHGHGKASSSYDGAGAPAPAPAPFQGHRKAGSG. Residues 1-69 lie on the Cytoplasmic side of the membrane; it reads MSGSDTSGSV…GSGGDGLRRC (69 aa). The chain crosses the membrane as a helical span at residues 70–90; it reads LGLIDFVLRVAAFGPTLAAAI. Residues 91-117 lie on the Extracellular side of the membrane; sequence SIGTSDERLSVFTNYFQFRARFDDFPA. Residues 118–138 traverse the membrane as a helical segment; the sequence is FEFFIVANAIAAGYMVLSLPF. Residues 139–152 lie on the Cytoplasmic side of the membrane; sequence SAATIMSSKATGVK. A helical membrane pass occupies residues 153–173; it reads LLLLICDTIMVGLLTAAASAA. Residues 174–205 lie on the Extracellular side of the membrane; sequence AAMVYVAHEGNLRANWVPICLQFHGFCQRTSG. A helical transmembrane segment spans residues 206–226; the sequence is AVIASFLAVFVLMVLIVMAAF. The Cytoplasmic portion of the chain corresponds to 227–237; that stretch reads TMPRRTHHTAS.

It belongs to the Casparian strip membrane proteins (CASP) family. As to quaternary structure, homodimer and heterodimers.

Its subcellular location is the cell membrane. Functionally, regulates membrane-cell wall junctions and localized cell wall deposition. Required for establishment of the Casparian strip membrane domain (CSD) and the subsequent formation of Casparian strips, a cell wall modification of the root endodermis that determines an apoplastic barrier between the intraorganismal apoplasm and the extraorganismal apoplasm and prevents lateral diffusion. In Oryza sativa subsp. japonica (Rice), this protein is Casparian strip membrane protein 2.